The sequence spans 74 residues: U3-agatoxin-Ao1b (74 aa).

A signal peptide spans 1–20 (MKAAISLIIFFAILFVVIEA). Positions 21–34 (ISYEEGKELFQKER) are excised as a propeptide. 4 disulfides stabilise this stretch: Cys-37/Cys-53, Cys-44/Cys-58, Cys-52/Cys-68, and Cys-60/Cys-66. Residue Ser-72 is modified to Serine amide.

The protein belongs to the neurotoxin 07 (Beta/delta-agtx) family. 02 (aga-3) subfamily. As to expression, expressed by the venom gland.

It is found in the secreted. Its function is as follows. Insecticidal neurotoxin that induces an irreversible spastic paralysis when injected into insects. Modifies presynaptic voltage-gated sodium channels (Nav), causing them to open at the normal resting potential of the nerve. This leads to spontaneous release of neurotransmitter and repetitive action potentials in motor neurons. The protein is U3-agatoxin-Ao1b of Agelena orientalis (Funnel-web spider).